We begin with the raw amino-acid sequence, 233 residues long: ATP synthase subunit a 2 (233 aa).

Helical transmembrane passes span 15–35 (FVVI…LVIG), 78–98 (YLAF…LTVV), 107–127 (SLST…IYGI), 169–189 (IMSG…FVPV), and 194–214 (LGLV…LVYI).

It belongs to the ATPase A chain family. In terms of assembly, F-type ATPases have 2 components, CF(1) - the catalytic core - and CF(0) - the membrane proton channel. CF(1) has five subunits: alpha(3), beta(3), gamma(1), delta(1), epsilon(1). CF(0) has four main subunits: a, b, b' and c.

Its subcellular location is the cellular thylakoid membrane. Key component of the proton channel; it plays a direct role in the translocation of protons across the membrane. The protein is ATP synthase subunit a 2 of Picosynechococcus sp. (strain ATCC 27264 / PCC 7002 / PR-6) (Agmenellum quadruplicatum).